The sequence spans 84 residues: Putative membrane protein insertion efficiency factor (84 aa).

Belongs to the UPF0161 family.

Its subcellular location is the cell inner membrane. Functionally, could be involved in insertion of integral membrane proteins into the membrane. The chain is Putative membrane protein insertion efficiency factor from Shewanella sp. (strain ANA-3).